Consider the following 59-residue polypeptide: Large ribosomal subunit protein uL30 (59 aa).

It belongs to the universal ribosomal protein uL30 family. In terms of assembly, part of the 50S ribosomal subunit.

This Staphylococcus aureus (strain JH1) protein is Large ribosomal subunit protein uL30.